Here is a 125-residue protein sequence, read N- to C-terminus: Large ribosomal subunit protein uL22c (125 aa).

The protein belongs to the universal ribosomal protein uL22 family. Part of the 50S ribosomal subunit.

It localises to the plastid. Its subcellular location is the chloroplast. Functionally, this protein binds specifically to 23S rRNA. In terms of biological role, the globular domain of the protein is located near the polypeptide exit tunnel on the outside of the subunit, while an extended beta-hairpin is found that lines the wall of the exit tunnel in the center of the 70S ribosome. This is Large ribosomal subunit protein uL22c (rpl22) from Nuphar advena (Common spatterdock).